We begin with the raw amino-acid sequence, 58 residues long: UPF0391 membrane protein Shew185_1413 (58 aa).

2 consecutive transmembrane segments (helical) span residues 6–26 and 28–48; these read LVFL…IAGA and AGIA…SLLI.

Belongs to the UPF0391 family.

The protein localises to the cell membrane. The chain is UPF0391 membrane protein Shew185_1413 from Shewanella baltica (strain OS185).